Reading from the N-terminus, the 430-residue chain is Adenylosuccinate synthetase (430 aa).

Residues 13–19 and 41–43 each bind GTP; these read GDEGKGK and GHT. Aspartate 14 serves as the catalytic Proton acceptor. Positions 14 and 41 each coordinate Mg(2+). IMP contacts are provided by residues 14–17, 39–42, threonine 130, arginine 144, glutamine 225, threonine 240, and arginine 304; these read DEGK and NAGH. Catalysis depends on histidine 42, which acts as the Proton donor. 300–306 is a substrate binding site; the sequence is STTGRKR. GTP-binding positions include arginine 306, 332-334, and 414-416; these read KLD and STG.

Belongs to the adenylosuccinate synthetase family. Homodimer. It depends on Mg(2+) as a cofactor.

It is found in the cytoplasm. It carries out the reaction IMP + L-aspartate + GTP = N(6)-(1,2-dicarboxyethyl)-AMP + GDP + phosphate + 2 H(+). The protein operates within purine metabolism; AMP biosynthesis via de novo pathway; AMP from IMP: step 1/2. In terms of biological role, plays an important role in the de novo pathway of purine nucleotide biosynthesis. Catalyzes the first committed step in the biosynthesis of AMP from IMP. This Buchnera aphidicola subsp. Schizaphis graminum (strain Sg) protein is Adenylosuccinate synthetase.